The primary structure comprises 176 residues: Co-chaperone protein HscB homolog (176 aa).

The J domain maps to 8 to 80 (DFFALFGLPV…LRRATYLLKL (73 aa)).

This sequence belongs to the HscB family. As to quaternary structure, interacts with HscA and stimulates its ATPase activity.

Co-chaperone involved in the maturation of iron-sulfur cluster-containing proteins. Seems to help targeting proteins to be folded toward HscA. This chain is Co-chaperone protein HscB homolog, found in Cupriavidus taiwanensis (strain DSM 17343 / BCRC 17206 / CCUG 44338 / CIP 107171 / LMG 19424 / R1) (Ralstonia taiwanensis (strain LMG 19424)).